Consider the following 250-residue polypeptide: MSGFRNRIQSWGKGLGTVLSDSIGDESSEKTSRSIQHNHYEEDDALPPVHLIGYSEKTKNRLLSKEMCEELRQLMPTRIQLYTEWTLLYSLEQHGASLHSLYDKLKYDTNNNARVGYVIVIRDRKGGIFGGYANETFHPTDSRRYYGNGECFLWKMEKVPDLQLHDKHDCKQDSHNWQLRGFPYTGENEFSIYCTSTFLSMGAGDGHYGLWIDDGLFRGVTFPSMTFGNDILSREGSKFHIVGVEVWRVG.

The TLDc domain maps to 61–250 (RLLSKEMCEE…IVGVEVWRVG (190 aa)).

The protein belongs to the OXR1 family.

The protein resides in the mitochondrion. Functionally, may be involved in protection from oxidative damage. This is Oxidation resistance protein 1 (OXR1) from Kluyveromyces lactis (strain ATCC 8585 / CBS 2359 / DSM 70799 / NBRC 1267 / NRRL Y-1140 / WM37) (Yeast).